Here is a 268-residue protein sequence, read N- to C-terminus: Energy-coupling factor transporter transmembrane protein EcfT (268 aa).

The next 6 membrane-spanning stretches (helical) occupy residues 26-46, 47-67, 73-93, 116-136, 151-171, and 246-266; these read ILAVLFYMVMVFLANSPLSYG, ILIGFIVLGAALAKLPAGLLL, LWIIILLTMVIHFVTDPGEAL, LVLLLLVSSLMTFTTSPIVLT, VPAHELAMMMTIALRFIPTLL, and ALTGLVMLALFVLLAFLRWGI.

The protein belongs to the energy-coupling factor EcfT family. In terms of assembly, forms a stable energy-coupling factor (ECF) transporter complex composed of 2 membrane-embedded substrate-binding proteins (S component), 2 ATP-binding proteins (A component) and 2 transmembrane proteins (T component). May be able to interact with more than 1 S component at a time.

The protein localises to the cell membrane. In terms of biological role, transmembrane (T) component of an energy-coupling factor (ECF) ABC-transporter complex. Unlike classic ABC transporters this ECF transporter provides the energy necessary to transport a number of different substrates. The polypeptide is Energy-coupling factor transporter transmembrane protein EcfT (Acidaminococcus fermentans (strain ATCC 25085 / DSM 20731 / CCUG 9996 / CIP 106432 / VR4)).